Here is a 156-residue protein sequence, read N- to C-terminus: Succinate dehydrogenase [ubiquinone] cytochrome b small subunit 1, mitochondrial (156 aa).

The transit peptide at 1–25 (MLSAVRRAIPLSARILRTSLIQRCA) directs the protein to the mitochondrion. Residues 26–59 (GATSAAVTGAAPPQFDPIAAEKGFKPLHSHGTLF) are Mitochondrial matrix-facing. Residues 60 to 78 (KIERYFAAAMVPLIPAAYF) form a helical membrane-spanning segment. The Mitochondrial intermembrane segment spans residues 79–83 (IHGRE). Residues 84–104 (MDLCLALALTLHVHWGVWGVV) form a helical membrane-spanning segment. Position 95 (histidine 95) interacts with heme b. The Mitochondrial matrix segment spans residues 105-119 (NDYGRPFVLGDTLAA). Position 107 (tyrosine 107) interacts with a rhodoquinol. Residues 120–141 (AVRVGAYIFTACLLAGLLYFNE) form a helical membrane-spanning segment. The Mitochondrial intermembrane segment spans residues 142–156 (HDVGLTRAFEMVWEL).

It belongs to the CybS family. As to quaternary structure, component of the mitochondrial electron transport chain complex II composed of four subunits: a flavoprotein (Fp), an iron-sulfur protein (Ip), and a large cytochrome b (CybL) subunit and a small cytochrome b (CybS) subunit. There are 2 developmental stage-specific forms of complex II which have the Ip and CybL subunits in common. Complex II from the free-living larvae (aerobic environment) acts as a succinate dehydrogenase and is composed of the common subunit Ip and CybL and the stage specific subunits FpL and CybSL. Complex II from parasitic larvae and adults (anaerobic environment) acts as a fumarate reductase and is composed of the common subunit Ip and CybL and the stage specific subunits FpA and CybSA. It depends on heme b as a cofactor. In terms of tissue distribution, expressed in adult muscles (at protein level).

The protein resides in the mitochondrion inner membrane. Its function is as follows. Membrane-bound small subunit (CybS) of the mitochondrial electron transport chain complex II, which together with the membrane-bound large subunit (CybL), anchor the catalytic subunits to the inner mitochondria membrane. During the parasitic larvae and adult stages, which occur in an anaerobic environment, complex II acts as a fumarate reductase by transferring electrons from rhodoquinol to fumarate. This Ascaris suum (Pig roundworm) protein is Succinate dehydrogenase [ubiquinone] cytochrome b small subunit 1, mitochondrial.